A 452-amino-acid chain; its full sequence is SAGA complex/transcription factor TFIID complex subunit Taf6 (452 aa).

The Histone-fold domain occupies 4 to 68; that stretch reads TVWNIESIKD…TSADISSALR (65 aa).

Belongs to the TAF6 family. In terms of assembly, component of the 1.8 MDa SAGA (Spt-Ada-Gcn5 acetyltransferase) complex, which is composed of 19 subunits tra1, spt7, taf5, ngg1/ada3, sgf73, spt20, spt8, taf12, taf6, hfi1/ada1, ubp8, gcn5, ada2, spt3, sgf29, taf10, taf9, sgf11 and sus1. The SAGA complex is composed of 4 modules, namely the HAT (histone acetyltransferase) module (gcn5, ada2, ngg1/ada3 and sgf29), the DUB (deubiquitinating) module (ubp8, sgf11, sgf73 and sus1), the core or TAF (TBP-associated factor) module (taf5, taf6, taf9, taf10 and taf12), and the Tra1 or SPT (Suppressor of Ty) module (tra1, hfi1/ada1, spt3, spt7, spt8 and spt20). The Tra1/SPT module binds activators, the core module recruits TBP (TATA-binding protein), the HAT module contains the histone H3 acetyltransferase gcn5, and the DUB module comprises the histone H2B deubiquitinase ubp8. Interacts with gcn5, taf5 and taf73. Component of the 1.2 MDa TFIID complex, which is composed of TATA-binding protein (TBP) and the 14 TBP-associated factors (TAFs). It comprises 1 copy of each taf1, taf2, taf3, taf7, taf8, taf11, taf13, 2 copies of each taf4, taf5, taf6, taf9, taf10, taf12, and 3 copies of taf14. In TFIID, taf6 heterodimerizes with taf9, forming ultimately an octamer consisting of a taf6-taf9 heterotetramer core flanked by taf4-taf12 dimers on either side, similar to the histone H2A-H2B-H3-H4 octamer.

The protein resides in the nucleus. In terms of biological role, functions as a component of both the DNA-binding general transcription initiation factor complex TFIID and the transcription coactivator SAGA complex. Binding of TFIID to a promoter (with or without TATA element) is the initial step in pre-initiation complex (PIC) formation. TFIID plays a key role in the regulation of gene expression by RNA polymerase II through different activities such as transcription activator interaction, core promoter recognition and selectivity, TFIIA and TFIIB interaction, chromatin modification (histone acetylation by TAF1), facilitation of DNA opening and initiation of transcription. SAGA acts as a general cofactor required for essentially all RNA polymerase II transcription. At the promoters, SAGA is required for transcription pre-initiation complex (PIC) recruitment. It influences RNA polymerase II transcriptional activity through different activities such as TBP interaction (via core/TAF module) and promoter selectivity, interaction with transcription activators (via Tra1/SPT module), and chromatin modification through histone acetylation (via HAT module) and deubiquitination (via DUB module). SAGA preferentially acetylates histones H3 (to form H3K9ac, H3K14ac, H3K18ac and H3K23ac) and H2B and deubiquitinates histone H2B. SAGA interacts with DNA via upstream activating sequences (UASs). The chain is SAGA complex/transcription factor TFIID complex subunit Taf6 from Schizosaccharomyces pombe (strain 972 / ATCC 24843) (Fission yeast).